We begin with the raw amino-acid sequence, 122 residues long: Small ribosomal subunit protein uS13 (122 aa).

Residues 99 to 122 form a disordered region; sequence RGQRTHTNARTRKGPAKAIAGKKK.

It belongs to the universal ribosomal protein uS13 family. As to quaternary structure, part of the 30S ribosomal subunit. Forms a loose heterodimer with protein S19. Forms two bridges to the 50S subunit in the 70S ribosome.

Functionally, located at the top of the head of the 30S subunit, it contacts several helices of the 16S rRNA. In the 70S ribosome it contacts the 23S rRNA (bridge B1a) and protein L5 of the 50S subunit (bridge B1b), connecting the 2 subunits; these bridges are implicated in subunit movement. Contacts the tRNAs in the A and P-sites. This Rhizobium etli (strain CIAT 652) protein is Small ribosomal subunit protein uS13.